Reading from the N-terminus, the 180-residue chain is O-acetyl-ADP-ribose deacetylase (180 aa).

One can recognise a Macro domain in the interval 1-175; that stretch reads MKPQIEVVVG…LYQRLLIQRG (175 aa). Substrate contacts are provided by residues 11-12, N25, 33-35, and 122-126; these read DI, GVD, and STGVY. Catalysis depends on D35, which acts as the Proton acceptor.

This sequence belongs to the MacroD-type family. YmdB subfamily. Homodimer. Interacts with RNase III.

It catalyses the reaction 3''-O-acetyl-ADP-D-ribose + H2O = ADP-D-ribose + acetate + H(+). The enzyme catalyses 2''-O-acetyl-ADP-D-ribose + H2O = ADP-D-ribose + acetate + H(+). Its function is as follows. Deacetylates O-acetyl-ADP ribose to yield ADP-ribose and free acetate. Down-regulates ribonuclease 3 (RNase III) activity. Acts by interacting directly with the region of the ribonuclease that is required for dimerization/activation. The chain is O-acetyl-ADP-ribose deacetylase from Enterobacter sp. (strain 638).